We begin with the raw amino-acid sequence, 357 residues long: tRNA N6-adenosine threonylcarbamoyltransferase (357 aa).

Fe cation contacts are provided by H116 and H120. Substrate is bound by residues 139-143, D172, G185, and N284; that span reads LVSGG. D312 provides a ligand contact to Fe cation.

This sequence belongs to the KAE1 / TsaD family. It depends on Fe(2+) as a cofactor.

It localises to the cytoplasm. The catalysed reaction is L-threonylcarbamoyladenylate + adenosine(37) in tRNA = N(6)-L-threonylcarbamoyladenosine(37) in tRNA + AMP + H(+). Required for the formation of a threonylcarbamoyl group on adenosine at position 37 (t(6)A37) in tRNAs that read codons beginning with adenine. Is involved in the transfer of the threonylcarbamoyl moiety of threonylcarbamoyl-AMP (TC-AMP) to the N6 group of A37, together with TsaE and TsaB. TsaD likely plays a direct catalytic role in this reaction. The protein is tRNA N6-adenosine threonylcarbamoyltransferase of Synechococcus sp. (strain CC9902).